The primary structure comprises 416 residues: Probable F-box protein At5g47300 (416 aa).

Residues 40–86 enclose the F-box domain; sequence TLMLSDLPGDLLEEILCRVPATSLKQLRSTCKQWNNLFNNGRFTRKH.

In Arabidopsis thaliana (Mouse-ear cress), this protein is Probable F-box protein At5g47300.